Here is a 400-residue protein sequence, read N- to C-terminus: Formate-dependent phosphoribosylglycinamide formyltransferase (400 aa).

N(1)-(5-phospho-beta-D-ribosyl)glycinamide is bound by residues 22–23 and glutamate 82; that span reads EL. ATP contacts are provided by residues arginine 115, lysine 156, 161 to 166, 196 to 199, and glutamate 204; these read SSGKGQ and EGFI. In terms of domain architecture, ATP-grasp spans 120-309; that stretch reads RLAAETLCLP…EFALHARAIL (190 aa). Residues glutamate 268 and glutamate 280 each contribute to the Mg(2+) site. N(1)-(5-phospho-beta-D-ribosyl)glycinamide is bound by residues aspartate 287, lysine 361, and 368 to 369; that span reads RR.

It belongs to the PurK/PurT family. As to quaternary structure, homodimer.

It carries out the reaction N(1)-(5-phospho-beta-D-ribosyl)glycinamide + formate + ATP = N(2)-formyl-N(1)-(5-phospho-beta-D-ribosyl)glycinamide + ADP + phosphate + H(+). It participates in purine metabolism; IMP biosynthesis via de novo pathway; N(2)-formyl-N(1)-(5-phospho-D-ribosyl)glycinamide from N(1)-(5-phospho-D-ribosyl)glycinamide (formate route): step 1/1. In terms of biological role, involved in the de novo purine biosynthesis. Catalyzes the transfer of formate to 5-phospho-ribosyl-glycinamide (GAR), producing 5-phospho-ribosyl-N-formylglycinamide (FGAR). Formate is provided by PurU via hydrolysis of 10-formyl-tetrahydrofolate. This chain is Formate-dependent phosphoribosylglycinamide formyltransferase, found in Xanthomonas euvesicatoria pv. vesicatoria (strain 85-10) (Xanthomonas campestris pv. vesicatoria).